A 134-amino-acid chain; its full sequence is Profilin-3 (134 aa).

Cysteines 13 and 118 form a disulfide. An Involved in PIP2 interaction motif is present at residues A84–T100. T114 bears the Phosphothreonine mark.

The protein belongs to the profilin family. In terms of assembly, occurs in many kinds of cells as a complex with monomeric actin in a 1:1 ratio. Post-translationally, phosphorylated by MAP kinases.

It localises to the cytoplasm. The protein localises to the cytoskeleton. Its function is as follows. Binds to actin and affects the structure of the cytoskeleton. At high concentrations, profilin prevents the polymerization of actin, whereas it enhances it at low concentrations. The polypeptide is Profilin-3 (Olea europaea (Common olive)).